A 616-amino-acid chain; its full sequence is MKQSKMLIPTLREMPSDAQVISHALLLRAGYVRQVSAGVYSYLPLANRVIEKAKNIMRQEFEKIGAVEMLAPALLSADLWRESGRYETYGDDLFKLKNREGSDFILGPTHEETFTALVRDSVKSYKQLPLNLYQIQPKYRDEKRPRNGLLRTREFIMKDAYSFHANYDSLDVTYDEYKSAYEKIFTRSEIDFKAIIGDGGAMGGKDSQEFMAITPDRTDLDRWLVLDKSVASLDEIPADVLEAIKAELSNWMVSGEDTIAYSSESSYAANLEMATNEYKPSNRVVAETELVRVETPNCKTIDEVAAFLQVSEEQTIKTLVYIADEKPVVALLVGNDQLNEVKLKNHLGADFFEAATEAEVQELFGANFGSLGPVNLPEEVTIIADRKVQDLSNAVAGANEDGYHLTGVNPGRDFTAEYVDIREVREGEISPDGNGVLKFARGIEIGHIFKLGTRYSDSMNATVLDENGRAVPLVMGCYGIGVSRLLSAVMEQHARLFVNKTPKGEYRYAWGINFPKELAPFDVHLIPVNVKDEESLALTDKIEESLVGAGYEVLVDDRNERVGVKFSDSDLIGLPIRVTVGKKAAEGIVEVKIKASGDTIEVHADNLIETLSILTK.

It belongs to the class-II aminoacyl-tRNA synthetase family. ProS type 1 subfamily. In terms of assembly, homodimer.

The protein localises to the cytoplasm. The enzyme catalyses tRNA(Pro) + L-proline + ATP = L-prolyl-tRNA(Pro) + AMP + diphosphate. In terms of biological role, catalyzes the attachment of proline to tRNA(Pro) in a two-step reaction: proline is first activated by ATP to form Pro-AMP and then transferred to the acceptor end of tRNA(Pro). As ProRS can inadvertently accommodate and process non-cognate amino acids such as alanine and cysteine, to avoid such errors it has two additional distinct editing activities against alanine. One activity is designated as 'pretransfer' editing and involves the tRNA(Pro)-independent hydrolysis of activated Ala-AMP. The other activity is designated 'posttransfer' editing and involves deacylation of mischarged Ala-tRNA(Pro). The misacylated Cys-tRNA(Pro) is not edited by ProRS. This is Proline--tRNA ligase from Streptococcus gordonii (strain Challis / ATCC 35105 / BCRC 15272 / CH1 / DL1 / V288).